A 471-amino-acid chain; its full sequence is 3-isopropylmalate dehydratase large subunit (471 aa).

Residues Cys349, Cys409, and Cys412 each coordinate [4Fe-4S] cluster.

Belongs to the aconitase/IPM isomerase family. LeuC type 1 subfamily. Heterodimer of LeuC and LeuD. [4Fe-4S] cluster serves as cofactor.

It carries out the reaction (2R,3S)-3-isopropylmalate = (2S)-2-isopropylmalate. It participates in amino-acid biosynthesis; L-leucine biosynthesis; L-leucine from 3-methyl-2-oxobutanoate: step 2/4. Catalyzes the isomerization between 2-isopropylmalate and 3-isopropylmalate, via the formation of 2-isopropylmaleate. In Aliivibrio fischeri (strain ATCC 700601 / ES114) (Vibrio fischeri), this protein is 3-isopropylmalate dehydratase large subunit.